The sequence spans 105 residues: Large ribosomal subunit protein mL49 (105 aa).

A mitochondrion-targeting transit peptide spans 1–15 (MRSSLKPVLSNLRFN).

Belongs to the mitochondrion-specific ribosomal protein mL49 family. In terms of assembly, component of the mitochondrial large ribosomal subunit (mt-LSU). Mature yeast 74S mitochondrial ribosomes consist of a small (37S) and a large (54S) subunit. The 37S small subunit contains a 15S ribosomal RNA (15S mt-rRNA) and at least 32 different proteins. The 54S large subunit contains a 21S rRNA (21S mt-rRNA) and at least 45 different proteins.

The protein localises to the mitochondrion. Functionally, component of the mitochondrial ribosome (mitoribosome), a dedicated translation machinery responsible for the synthesis of mitochondrial genome-encoded proteins, including at least some of the essential transmembrane subunits of the mitochondrial respiratory chain. The mitoribosomes are attached to the mitochondrial inner membrane and translation products are cotranslationally integrated into the membrane. The protein is Large ribosomal subunit protein mL49 (img2) of Schizosaccharomyces pombe (strain 972 / ATCC 24843) (Fission yeast).